The chain runs to 397 residues: CCA-adding enzyme (397 aa).

Residues Gly-26 and Arg-29 each contribute to the ATP site. The CTP site is built by Gly-26 and Arg-29. Positions 39 and 41 each coordinate Mg(2+). ATP is bound by residues Arg-110, Asp-153, Arg-156, Arg-159, and Arg-162. Arg-110, Asp-153, Arg-156, Arg-159, and Arg-162 together coordinate CTP.

This sequence belongs to the tRNA nucleotidyltransferase/poly(A) polymerase family. Bacterial CCA-adding enzyme type 3 subfamily. As to quaternary structure, homodimer. Mg(2+) serves as cofactor.

It catalyses the reaction a tRNA precursor + 2 CTP + ATP = a tRNA with a 3' CCA end + 3 diphosphate. The catalysed reaction is a tRNA with a 3' CCA end + 2 CTP + ATP = a tRNA with a 3' CCACCA end + 3 diphosphate. Functionally, catalyzes the addition and repair of the essential 3'-terminal CCA sequence in tRNAs without using a nucleic acid template. Adds these three nucleotides in the order of C, C, and A to the tRNA nucleotide-73, using CTP and ATP as substrates and producing inorganic pyrophosphate. tRNA 3'-terminal CCA addition is required both for tRNA processing and repair. Also involved in tRNA surveillance by mediating tandem CCA addition to generate a CCACCA at the 3' terminus of unstable tRNAs. While stable tRNAs receive only 3'-terminal CCA, unstable tRNAs are marked with CCACCA and rapidly degraded. The sequence is that of CCA-adding enzyme from Bacillus cereus (strain AH187).